We begin with the raw amino-acid sequence, 1044 residues long: Integrin alpha-8 (1044 aa).

The signal sequence occupies residues 1–23 (MPRRQPPRPLLLLSALLCAPASA). Over 24–991 (FNLDEEKLTV…WSTPNVSFVI (968 aa)) the chain is Extracellular. 7 FG-GAP repeats span residues 28-90 (EEKL…RCRQ), 104-165 (NGTR…AYAE), 170-222 (RNSN…ITNY), 236-288 (QTGV…SSDL), 289-354 (TFIQ…FLFR), 355-413 (DPQI…GLKT), and 417-480 (QVLN…LNPM). A glycan (N-linked (GlcNAc...) asparagine) is linked at N66. A disulfide bridge connects residues C81 and C88. Residue N104 is glycosylated (N-linked (GlcNAc...) asparagine). C132 and C153 are oxidised to a cystine. N159 carries an N-linked (GlcNAc...) asparagine glycan. Residues C169 and C182 are joined by a disulfide bond. N-linked (GlcNAc...) asparagine glycosylation is present at N221. The Ca(2+) site is built by E257, T259, D261, and E265. N284 and N293 each carry an N-linked (GlcNAc...) asparagine glycan. Ca(2+) is bound by residues D311, N313, D315, L317, D319, D377, N379, D381, Y383, and D385. The short motif at 437–439 (RGD) is the Cell attachment site element. Ca(2+) contacts are provided by D441, D443, N445, Y447, and D449. The N-linked (GlcNAc...) asparagine glycan is linked to N486. Cystine bridges form between C489–C500 and C506–C562. N587 carries N-linked (GlcNAc...) asparagine glycosylation. Disulfide bonds link C623–C629 and C695–C708. N701, N719, N751, N762, N818, N877, and N904 each carry an N-linked (GlcNAc...) asparagine glycan. Intrachain disulfides connect C849/C905 and C910/C915. Residues N952 and N986 are each glycosylated (N-linked (GlcNAc...) asparagine). Residues 992-1015 (PLWVIILAIMLGLLVLAVLTLALW) form a helical membrane-spanning segment. Residues 1016–1044 (KCGFFDRARPPQDDMADREQLTNNKTTDA) are Cytoplasmic-facing.

It belongs to the integrin alpha chain family. As to quaternary structure, heterodimer of an alpha and a beta subunit. The alpha subunit is composed of a heavy and a light chain linked by a disulfide bond. Alpha-8 associates with beta-1. Prominently expressed on axons and on cells in contact with basal laminae in embryos.

The protein resides in the membrane. The protein localises to the cell membrane. Functionally, integrin alpha-8/beta-1 functions in the genesis of kidney and probably of other organs by regulating the recruitment of mesenchymal cells into epithelial structures. It recognizes the sequence R-G-D in a wide array of ligands including TNC, FN1, SPP1, TGFB1, TGFB3 and VTN. NPNT is probably its functional ligand in kidney genesis. Neuronal receptor for TNC it mediates cell-cell interactions and regulates neurite outgrowth of sensory and motor neurons. The polypeptide is Integrin alpha-8 (ITGA8) (Gallus gallus (Chicken)).